Consider the following 205-residue polypeptide: ATP synthase subunit b 1 (205 aa).

The span at 1 to 15 (MFVSTAFAQTATESQ) shows a compositional bias: polar residues. Positions 1 to 26 (MFVSTAFAQTATESQPAPAAGEHGAA) are disordered. A compositionally biased stretch (low complexity) spans 16–26 (PAPAAGEHGAA). The helical transmembrane segment at 56 to 78 (SQILWLAITFGLFYLFMSRVVLP) threads the bilayer.

It belongs to the ATPase B chain family. F-type ATPases have 2 components, F(1) - the catalytic core - and F(0) - the membrane proton channel. F(1) has five subunits: alpha(3), beta(3), gamma(1), delta(1), epsilon(1). F(0) has three main subunits: a(1), b(2) and c(10-14). The alpha and beta chains form an alternating ring which encloses part of the gamma chain. F(1) is attached to F(0) by a central stalk formed by the gamma and epsilon chains, while a peripheral stalk is formed by the delta and b chains.

The protein localises to the cell inner membrane. F(1)F(0) ATP synthase produces ATP from ADP in the presence of a proton or sodium gradient. F-type ATPases consist of two structural domains, F(1) containing the extramembraneous catalytic core and F(0) containing the membrane proton channel, linked together by a central stalk and a peripheral stalk. During catalysis, ATP synthesis in the catalytic domain of F(1) is coupled via a rotary mechanism of the central stalk subunits to proton translocation. Its function is as follows. Component of the F(0) channel, it forms part of the peripheral stalk, linking F(1) to F(0). This is ATP synthase subunit b 1 from Brucella anthropi (strain ATCC 49188 / DSM 6882 / CCUG 24695 / JCM 21032 / LMG 3331 / NBRC 15819 / NCTC 12168 / Alc 37) (Ochrobactrum anthropi).